A 499-amino-acid chain; its full sequence is Aspartyl/glutamyl-tRNA(Asn/Gln) amidotransferase subunit B (499 aa).

This sequence belongs to the GatB/GatE family. GatB subfamily. In terms of assembly, heterotrimer of A, B and C subunits.

The catalysed reaction is L-glutamyl-tRNA(Gln) + L-glutamine + ATP + H2O = L-glutaminyl-tRNA(Gln) + L-glutamate + ADP + phosphate + H(+). It carries out the reaction L-aspartyl-tRNA(Asn) + L-glutamine + ATP + H2O = L-asparaginyl-tRNA(Asn) + L-glutamate + ADP + phosphate + 2 H(+). Functionally, allows the formation of correctly charged Asn-tRNA(Asn) or Gln-tRNA(Gln) through the transamidation of misacylated Asp-tRNA(Asn) or Glu-tRNA(Gln) in organisms which lack either or both of asparaginyl-tRNA or glutaminyl-tRNA synthetases. The reaction takes place in the presence of glutamine and ATP through an activated phospho-Asp-tRNA(Asn) or phospho-Glu-tRNA(Gln). In Bartonella tribocorum (strain CIP 105476 / IBS 506), this protein is Aspartyl/glutamyl-tRNA(Asn/Gln) amidotransferase subunit B.